A 602-amino-acid polypeptide reads, in one-letter code: Threonine--tRNA ligase (602 aa).

The tract at residues 208–499 is catalytic; the sequence is DHRKLGTELK…LTEHCAGEFP (292 aa). Zn(2+) contacts are provided by Cys300, His351, and His476.

The protein belongs to the class-II aminoacyl-tRNA synthetase family. As to quaternary structure, homodimer. The cofactor is Zn(2+).

The protein localises to the cytoplasm. The enzyme catalyses tRNA(Thr) + L-threonine + ATP = L-threonyl-tRNA(Thr) + AMP + diphosphate + H(+). In terms of biological role, catalyzes the attachment of threonine to tRNA(Thr) in a two-step reaction: L-threonine is first activated by ATP to form Thr-AMP and then transferred to the acceptor end of tRNA(Thr). Also edits incorrectly charged L-seryl-tRNA(Thr). The polypeptide is Threonine--tRNA ligase (Campylobacter jejuni subsp. jejuni serotype O:6 (strain 81116 / NCTC 11828)).